A 161-amino-acid polypeptide reads, in one-letter code: N5-carboxyaminoimidazole ribonucleotide mutase (161 aa).

Residues S9, D12, and R39 each coordinate substrate.

Belongs to the AIR carboxylase family. Class I subfamily.

It catalyses the reaction 5-carboxyamino-1-(5-phospho-D-ribosyl)imidazole + H(+) = 5-amino-1-(5-phospho-D-ribosyl)imidazole-4-carboxylate. It participates in purine metabolism; IMP biosynthesis via de novo pathway; 5-amino-1-(5-phospho-D-ribosyl)imidazole-4-carboxylate from 5-amino-1-(5-phospho-D-ribosyl)imidazole (N5-CAIR route): step 2/2. Functionally, catalyzes the conversion of N5-carboxyaminoimidazole ribonucleotide (N5-CAIR) to 4-carboxy-5-aminoimidazole ribonucleotide (CAIR). In Aliivibrio fischeri (strain ATCC 700601 / ES114) (Vibrio fischeri), this protein is N5-carboxyaminoimidazole ribonucleotide mutase.